A 238-amino-acid polypeptide reads, in one-letter code: EKC/KEOPS complex subunit SPAP27G11.07c (238 aa).

One can recognise a Protein kinase domain in the interval 20-238 (EKKLTVVKQG…MRGRKRTMIG (219 aa)). ATP-binding positions include 26–34 (VKQGAEAIT) and Lys48. The Proton acceptor role is filled by Asp148.

Belongs to the protein kinase superfamily. BUD32 family. Component of the EKC/KEOPS complex composed of at least SPAP27G11.07c/BUD32, cgi121, gon7, pgp2 and SPAC4H3.13/PCC1; the whole complex dimerizes.

It localises to the cytoplasm. Its subcellular location is the nucleus. The protein resides in the chromosome. The protein localises to the telomere. The enzyme catalyses L-seryl-[protein] + ATP = O-phospho-L-seryl-[protein] + ADP + H(+). The catalysed reaction is L-threonyl-[protein] + ATP = O-phospho-L-threonyl-[protein] + ADP + H(+). In terms of biological role, component of the EKC/KEOPS complex that is required for the formation of a threonylcarbamoyl group on adenosine at position 37 (t(6)A37) in tRNAs that read codons beginning with adenine. The complex is probably involved in the transfer of the threonylcarbamoyl moiety of threonylcarbamoyl-AMP (TC-AMP) to the N6 group of A37. BUD32 has ATPase activity in the context of the EKC/KEOPS complex and likely plays a supporting role to the catalytic subunit KAE1. The EKC/KEOPS complex also promotes both telomere uncapping and telomere elongation. The complex is required for efficient recruitment of transcriptional coactivators. This Schizosaccharomyces pombe (strain 972 / ATCC 24843) (Fission yeast) protein is EKC/KEOPS complex subunit SPAP27G11.07c.